Reading from the N-terminus, the 211-residue chain is Large ribosomal subunit protein uL3 (211 aa).

Glutamine 150 is subject to N5-methylglutamine.

Belongs to the universal ribosomal protein uL3 family. Part of the 50S ribosomal subunit. Forms a cluster with proteins L14 and L19. Post-translationally, methylated by PrmB.

In terms of biological role, one of the primary rRNA binding proteins, it binds directly near the 3'-end of the 23S rRNA, where it nucleates assembly of the 50S subunit. In Pseudomonas fluorescens (strain Pf0-1), this protein is Large ribosomal subunit protein uL3.